A 360-amino-acid chain; its full sequence is Phenylalanine--tRNA ligase alpha subunit (360 aa).

E264 is a binding site for Mg(2+).

The protein belongs to the class-II aminoacyl-tRNA synthetase family. Phe-tRNA synthetase alpha subunit type 1 subfamily. Tetramer of two alpha and two beta subunits. Mg(2+) is required as a cofactor.

Its subcellular location is the cytoplasm. The catalysed reaction is tRNA(Phe) + L-phenylalanine + ATP = L-phenylalanyl-tRNA(Phe) + AMP + diphosphate + H(+). The chain is Phenylalanine--tRNA ligase alpha subunit from Streptomyces avermitilis (strain ATCC 31267 / DSM 46492 / JCM 5070 / NBRC 14893 / NCIMB 12804 / NRRL 8165 / MA-4680).